Consider the following 186-residue polypeptide: LIM domain-containing protein DDB_G0271356 (186 aa).

3 consecutive LIM zinc-binding domains span residues 7-67 (PECY…DKFA), 68-127 (PKCQ…KIGF), and 128-186 (LCRH…KLYG).

This chain is LIM domain-containing protein DDB_G0271356, found in Dictyostelium discoideum (Social amoeba).